We begin with the raw amino-acid sequence, 111 residues long: Estrogen receptor (111 aa).

A disordered region spans residues 1–42 (PSGYAVREAGPPAYYRPNSDNRRQGGRERLASTSDKGSMAVE). Residues 1 to 49 (PSGYAVREAGPPAYYRPNSDNRRQGGRERLASTSDKGSMAVESAKETRY) form a modulating region. Positions 19-30 (SDNRRQGGRERL) are enriched in basic and acidic residues. At Ser-32 the chain carries Phosphoserine. 2 NR C4-type zinc fingers span residues 50-70 (CAVCNDYASGYHYGVWSCEGC) and 86-110 (CPATNQCTIDKNRRKSCQACRLRKC). A DNA-binding region (nuclear receptor) is located at residues 50 to 111 (CAVCNDYASG…CQACRLRKCY (62 aa)).

The protein belongs to the nuclear hormone receptor family. NR3 subfamily. As to quaternary structure, binds DNA as a homodimer. Can form a heterodimer with ESR2. Interacts with coactivator NCOA5. Interacts with PELP1, the interaction is enhanced by 17-beta-estradiol; the interaction increases ESR1 transcriptional activity. Interacts with NCOA7; the interaction is ligand-inducible. Interacts with AKAP13, CUEDC2, HEXIM1, KDM5A, MAP1S, SMARD1, and UBE1C. Interacts with MUC1; the interaction is stimulated by 7 beta-estradiol (E2) and enhances ESR1-mediated transcription. Interacts with DNTTIP2, and UIMC1. Interacts with KMT2D/MLL2. Interacts with ATAD2; the interaction is enhanced by estradiol. Interacts with KIF18A and LDB1. Interacts with RLIM (via its C-terminus). Interacts with MACROD1. Interacts with SH2D4A and PLCG. Interacts with SH2D4A; the interaction blocks binding to PLCG and inhibits estrogen-induced cell proliferation. Interacts with DYNLL1. Interacts with CCDC62; the interaction requires estradiol and appears to enhance the transcription of target genes. Interacts with NR2C1; the interaction prevents homodimerization of ESR1 and suppresses its transcriptional activity and cell growth. Interacts with DNAAF4. Interacts with PRMT2. Interacts with RBFOX2. Interacts with EP300; the interaction is estrogen-dependent and enhanced by CITED1. Interacts with CITED1; the interaction is estrogen-dependent. Interacts with FAM120B, FOXL2, PHB2 and SLC30A9. Interacts with coactivators NCOA3 and NCOA6. Interacts with STK3/MST2 only in the presence of SAV1 and vice-versa. Binds to CSNK1D. Interacts with NCOA2; NCOA2 can interact with ESR1 AF-1 and AF-2 domains simultaneously and mediate their transcriptional synergy. Interacts with DDX5. Interacts with NCOA1; the interaction seems to require a self-association of N-terminal and C-terminal regions. Interacts with ZNF366, DDX17, NFKB1, RELA, SP1 and SP3. Interacts with NRIP1. Interacts with GPER1; the interaction occurs in an estrogen-dependent manner. Interacts with CLOCK and the interaction is stimulated by estrogen. Interacts with TRIP4 (ufmylated); estrogen dependent. Interacts with LMTK3; the interaction phosphorylates ESR1 (in vitro) and protects it against proteasomal degradation. Interacts with CCAR2 (via N-terminus) in a ligand-independent manner. Interacts with ZFHX3. Interacts with SFR1 in a ligand-dependent and -independent manner. Interacts with DCAF13, LATS1 and DCAF1; regulates ESR1 ubiquitination and ubiquitin-mediated proteasomal degradation. Interacts (via DNA-binding domain) with POU4F2 (C-terminus); this interaction increases the estrogen receptor ESR1 transcriptional activity in a DNA- and ligand 17-beta-estradiol-independent manner. Interacts with ESRRB isoform 1. Interacts with UBE3A and WBP2. Interacts with GTF2B. Interacts with RBM39. In the absence of hormonal ligand, interacts with TACC1. Interacts with PI3KR1 or PI3KR2 and PTK2/FAK1. Interacts with SRC. Interacts with BAG1; the interaction is promoted in the absence of estradiol (17-beta-estradiol/E2). Interacts with and ubiquitinated by STUB1; the interaction is promoted in the absence of estradiol (17-beta-estradiol/E2). Interacts with NEDD8. Post-translationally, ubiquitinated; regulated by LATS1 via DCAF1 it leads to ESR1 proteasomal degradation. Deubiquitinated by OTUB1. Ubiquitinated by STUB1/CHIP; in the CA1 hippocampal region following loss of endogenous circulating estradiol (17-beta-estradiol/E2). Ubiquitinated by UBR5, leading to its degradation: UBR5 specifically recognizes and binds ligand-bound ESR1 when it is not associated with coactivators (NCOAs). In presence of NCOAs, the UBR5-degron is not accessible, preventing its ubiquitination and degradation. In terms of processing, dimethylated by PRMT1. Demethylated by JMJD6. Palmitoylated by ZDHHC7 and ZDHHC21. This modification is required for plasma membrane targeting and for rapid intracellular signaling via ERK and AKT kinases and cAMP generation, but not for signaling mediated by the nuclear hormone receptor. Post-translationally, phosphorylated by cyclin A/CDK2 and CK1. Phosphorylation probably enhances transcriptional activity. Dephosphorylation by PPP5C inhibits its transactivation activity. Phosphorylated by LMTK3 (in vitro).

The protein localises to the nucleus. The protein resides in the cytoplasm. It localises to the golgi apparatus. It is found in the cell membrane. Nuclear hormone receptor. The steroid hormones and their receptors are involved in the regulation of eukaryotic gene expression and affect cellular proliferation and differentiation in target tissues. Ligand-dependent nuclear transactivation involves either direct homodimer binding to a palindromic estrogen response element (ERE) sequence or association with other DNA-binding transcription factors, such as AP-1/c-Jun, c-Fos, ATF-2, Sp1 and Sp3, to mediate ERE-independent signaling. Ligand binding induces a conformational change allowing subsequent or combinatorial association with multiprotein coactivator complexes through LXXLL motifs of their respective components. Mutual transrepression occurs between the estrogen receptor (ER) and NF-kappa-B in a cell-type specific manner. Decreases NF-kappa-B DNA-binding activity and inhibits NF-kappa-B-mediated transcription from the IL6 promoter and displace RELA/p65 and associated coregulators from the promoter. Recruited to the NF-kappa-B response element of the CCL2 and IL8 promoters and can displace CREBBP. Present with NF-kappa-B components RELA/p65 and NFKB1/p50 on ERE sequences. Can also act synergistically with NF-kappa-B to activate transcription involving respective recruitment adjacent response elements; the function involves CREBBP. Can activate the transcriptional activity of TFF1. Also mediates membrane-initiated estrogen signaling involving various kinase cascades. Essential for MTA1-mediated transcriptional regulation of BRCA1 and BCAS3. Maintains neuronal survival in response to ischemic reperfusion injury when in the presence of circulating estradiol (17-beta-estradiol/E2). This is Estrogen receptor (ESR1) from Ovis aries (Sheep).